The chain runs to 478 residues: Glycogen synthase (478 aa).

K20 provides a ligand contact to ADP-alpha-D-glucose.

The protein belongs to the glycosyltransferase 1 family. Bacterial/plant glycogen synthase subfamily.

The catalysed reaction is [(1-&gt;4)-alpha-D-glucosyl](n) + ADP-alpha-D-glucose = [(1-&gt;4)-alpha-D-glucosyl](n+1) + ADP + H(+). Its pathway is glycan biosynthesis; glycogen biosynthesis. Synthesizes alpha-1,4-glucan chains using ADP-glucose. The sequence is that of Glycogen synthase from Cereibacter sphaeroides (strain ATCC 17025 / ATH 2.4.3) (Rhodobacter sphaeroides).